Here is a 399-residue protein sequence, read N- to C-terminus: Acetate kinase (399 aa).

Asn7 is a binding site for Mg(2+). Lys14 lines the ATP pocket. A substrate-binding site is contributed by Arg91. Asp148 functions as the Proton donor/acceptor in the catalytic mechanism. ATP-binding positions include 208–212 (HLGNG), 283–285 (DFR), and 331–335 (GLGEN). Glu384 contacts Mg(2+).

The protein belongs to the acetokinase family. Homodimer. The cofactor is Mg(2+). Mn(2+) serves as cofactor.

Its subcellular location is the cytoplasm. The catalysed reaction is acetate + ATP = acetyl phosphate + ADP. The protein operates within metabolic intermediate biosynthesis; acetyl-CoA biosynthesis; acetyl-CoA from acetate: step 1/2. Its function is as follows. Catalyzes the formation of acetyl phosphate from acetate and ATP. Can also catalyze the reverse reaction. This Desulfitobacterium hafniense (strain DSM 10664 / DCB-2) protein is Acetate kinase.